Here is a 944-residue protein sequence, read N- to C-terminus: Calcium-transporting ATPase type 2C member 2 (944 aa).

The Cytoplasmic portion of the chain corresponds to 1–104 (MGRRFKFLQK…DNTEPVWKKY (104 aa)). Residues 69-93 (VDLDSGLSEFAVAQRRLVHGWNEFV) form an interaction with ORAI1 region. Residues 105–125 (LDQFRNPLILLLLGSSVVSVL) traverse the membrane as a helical segment. Residues 126–127 (TK) lie on the Extracellular side of the membrane. Residues 128–148 (EYEDAISIALAVLIVVTVGFI) form a helical membrane-spanning segment. Residues 149 to 229 (QEYRSEKSLE…EVEPCSKTDS (81 aa)) are Cytoplasmic-facing. The chain crosses the membrane as a helical span at residues 230–250 (PLAGGGDLSTLSNVVFMGTLV). Residues 251-291 (QCGKGQGVVIGTGEQSQFGEVFKMMRAEETPKTPLQKSMDK) are Extracellular-facing. Threonine 262 is modified (phosphothreonine). Serine 266 is subject to Phosphoserine. A helical membrane pass occupies residues 292 to 312 (LGKQLTVFSFGIIGLLMLVGW). The Cytoplasmic portion of the chain corresponds to 313–329 (VQGKPLLSMFTIGVSLA). Residues valine 330, alanine 331, isoleucine 333, and glutamate 335 each contribute to the Ca(2+) site. The helical transmembrane segment at 330–350 (VAAIPEGLPIVVMVTLVLGVL) threads the bilayer. Topologically, residues 351-748 (RMAKKRVIVK…IAALSLITLS (398 aa)) are extracellular. Aspartate 377 functions as the 4-aspartylphosphate intermediate in the catalytic mechanism. Mg(2+)-binding residues include aspartate 672 and aspartate 676. The helical transmembrane segment at 749-769 (TVCNLPNPLNAMQILWVNIIM) threads the bilayer. Ca(2+) is bound by residues asparagine 766 and aspartate 770. Residues 770–802 (DGPPAQSLGVEPVDRDALKRPPRSVKDTILNRA) are Cytoplasmic-facing. The chain crosses the membrane as a helical span at residues 803 to 823 (LILKILMSAAVILGGTLFIFW). Residues 824 to 835 (REIPENRTSTPR) lie on the Extracellular side of the membrane. The helical transmembrane segment at 836-853 (TTTMAFTCFVFFDLFNAL) threads the bilayer. At 854–872 (SCRSQTKLIFEIGFFRNRM) the chain is on the cytoplasmic side. The chain crosses the membrane as a helical span at residues 873-893 (FLYSILGSLLGQLAVIYAPPL). Residues 894–903 (QKVFQTENLS) lie on the Extracellular side of the membrane. The chain crosses the membrane as a helical span at residues 904–924 (ALDLLLLTGLASSVFILSELL). At 925 to 944 (KLCEKFCSRAKADQMLPEAV) the chain is on the cytoplasmic side.

It belongs to the cation transport ATPase (P-type) (TC 3.A.3) family. Type IIA subfamily. As to quaternary structure, interacts (via N-terminus) with ORAI1 (via N- and C-termini); this interaction regulates Ca(2+) influx at the plasma membrane.

The protein resides in the golgi apparatus. The protein localises to the trans-Golgi network membrane. It localises to the cell membrane. It is found in the basolateral cell membrane. The catalysed reaction is Ca(2+)(in) + ATP + H2O = Ca(2+)(out) + ADP + phosphate + H(+). It carries out the reaction Mn(2+)(in) + ATP + H2O = Mn(2+)(out) + ADP + phosphate + H(+). In terms of biological role, ATP-driven pump that supplies the Golgi apparatus with Ca(2+) and Mn(2+) ions, both essential cofactors for processing and trafficking of newly synthesized proteins in the secretory pathway. Within a catalytic cycle, acquires Ca(2+) or Mn(2+) ions on the cytoplasmic side of the membrane and delivers them to the lumenal side. The transfer of ions across the membrane is coupled to ATP hydrolysis and is associated with a transient phosphorylation that shifts the pump conformation from inward-facing to outward-facing state. Induces Ca(2+) influx independently of its ATP-driven pump function. At the basolateral membrane of mammary epithelial cells, interacts with Ca(2+) channel ORAI1 and mediates Ca(2+) entry independently of the Ca(2+) content of endoplasmic reticulum or Golgi stores. May facilitate transepithelial transport of large quantities of Ca(2+) for milk secretion via activation of Ca(2+) influx channels at the plasma membrane and active Ca(2+) transport at the Golgi apparatus. This chain is Calcium-transporting ATPase type 2C member 2 (Atp2c2), found in Rattus norvegicus (Rat).